A 154-amino-acid chain; its full sequence is Myoglobin (154 aa).

The 147-residue stretch at 2-148 (GLSDDEWHHV…FRNDMASKYK (147 aa)) folds into the Globin domain. H65 lines the nitrite pocket. H65 is a binding site for O2. H94 contributes to the heme b binding site.

It belongs to the globin family. Monomeric.

It is found in the cytoplasm. Its subcellular location is the sarcoplasm. It carries out the reaction Fe(III)-heme b-[protein] + nitric oxide + H2O = Fe(II)-heme b-[protein] + nitrite + 2 H(+). The catalysed reaction is H2O2 + AH2 = A + 2 H2O. In terms of biological role, monomeric heme protein which primary function is to store oxygen and facilitate its diffusion within muscle tissues. Reversibly binds oxygen through a pentacoordinated heme iron and enables its timely and efficient release as needed during periods of heightened demand. Depending on the oxidative conditions of tissues and cells, and in addition to its ability to bind oxygen, it also has a nitrite reductase activity whereby it regulates the production of bioactive nitric oxide. Under stress conditions, like hypoxia and anoxia, it also protects cells against reactive oxygen species thanks to its pseudoperoxidase activity. The sequence is that of Myoglobin (MB) from Graptemys geographica (Common map turtle).